The chain runs to 197 residues: Inner membrane protein p54 (197 aa).

The helical transmembrane segment at 32–52 (YTILIAIVVLVIIIIVLIYLF) threads the bilayer. A disordered region spans residues 84–123 (PQPGTSKPAGATTASVGKPVTGRPATNRPVTDRPATNNPV). 4 consecutive repeat copies span residues 139 to 142 (AAAS), 143 to 146 (AAAS), 147 to 150 (AAAS), and 151 to 154 (AAAS). The segment at 139–154 (AAASAAASAAASAAAS) is 4 X 4 AA tandem repeats of A-A-A-S. An interaction with host DYNLL1 region spans residues 163 to 175 (YTTVTTQNTASQT).

Belongs to the asfivirus envelope protein p54 family. As to quaternary structure, interacts with the host light chain cytoplasmic dynein DYNLL1; this interaction is critical for intracellular microtubule-dependent virus transport toward viral factories.

The protein localises to the virion membrane. Its subcellular location is the host cytoplasm. It is found in the host cytoskeleton. It localises to the host endoplasmic reticulum membrane. In terms of biological role, inner envelope protein involved, through its interaction with host dynein, in the intracellular microtubule-dependent transport of viral capsid toward viral factories. Seems to induce caspase-3 activation and apoptosis. Plays a role in virion morphogenesis by recruiting and transforming the host ER membranes into the precursors of the viral envelope. Involved in virus attachment to the host cell. The sequence is that of Inner membrane protein p54 from African swine fever virus (isolate Tick/South Africa/Pretoriuskop Pr4/1996) (ASFV).